The following is an 85-amino-acid chain: U4-theraphotoxin-Hhn1a (85 aa).

Positions 1 to 22 are cleaved as a signal peptide; sequence MKVTLISILTCAAVLVLHTTAA. A propeptide spanning residues 23–48 is cleaved from the precursor; that stretch reads EELEAESQLMEVGMPDTELAAVDEER. 3 disulfides stabilise this stretch: C52–C66, C56–C77, and C71–C82.

This sequence belongs to the neurotoxin 12 (Hwtx-2) family. 02 (Hwtx-2) subfamily. In terms of assembly, monomer. In terms of tissue distribution, expressed by the venom gland.

The protein localises to the secreted. Functionally, neurotoxin active on both insects and mammals. The polypeptide is U4-theraphotoxin-Hhn1a (Cyriopagopus hainanus (Chinese bird spider)).